The following is a 56-amino-acid chain: Small ribosomal subunit protein uS14 (56 aa).

4 residues coordinate Zn(2+): Cys21, Cys24, Cys39, and Cys42.

The protein belongs to the universal ribosomal protein uS14 family. As to quaternary structure, component of the 40S small ribosomal subunit. Zn(2+) is required as a cofactor.

The protein resides in the cytoplasm. Its subcellular location is the cytosol. The protein localises to the rough endoplasmic reticulum. The sequence is that of Small ribosomal subunit protein uS14 (RpS29) from Lonomia obliqua (Moth).